Consider the following 137-residue polypeptide: Large ribosomal subunit protein uL16c (137 aa).

The protein belongs to the universal ribosomal protein uL16 family. As to quaternary structure, part of the 50S ribosomal subunit.

The protein resides in the plastid. The chain is Large ribosomal subunit protein uL16c (rpl16) from Helicosporidium sp. subsp. Simulium jonesii (Green alga).